The sequence spans 426 residues: Histidine--tRNA ligase (426 aa).

This sequence belongs to the class-II aminoacyl-tRNA synthetase family. Homodimer.

It localises to the cytoplasm. It carries out the reaction tRNA(His) + L-histidine + ATP = L-histidyl-tRNA(His) + AMP + diphosphate + H(+). The sequence is that of Histidine--tRNA ligase from Legionella pneumophila subsp. pneumophila (strain Philadelphia 1 / ATCC 33152 / DSM 7513).